Reading from the N-terminus, the 776-residue chain is Protein phosphatase 1 regulatory subunit 21 (776 aa).

3 coiled-coil regions span residues glycine 4–leucine 206, arginine 432–aspartate 466, and glutamate 555–leucine 597.

In terms of assembly, component of the FERRY complex.

It localises to the early endosome. In terms of biological role, component of the FERRY complex (Five-subunit Endosomal Rab5 and RNA/ribosome intermediary). The FERRY complex directly interacts with mRNAs and RAB5A, and functions as a RAB5A effector involved in the localization and the distribution of specific mRNAs most likely by mediating their endosomal transport. The complex recruits mRNAs and ribosomes to early endosomes through direct mRNA-interaction. Putative regulator of protein phosphatase 1 (PP1) activity. May play a role in the endosomal sorting process or in endosome maturation pathway. The chain is Protein phosphatase 1 regulatory subunit 21 (ppp1r21) from Xenopus laevis (African clawed frog).